Reading from the N-terminus, the 247-residue chain is Adenosylcobinamide-GDP ribazoletransferase (247 aa).

Transmembrane regions (helical) follow at residues 34-54, 59-79, 113-133, 138-158, and 187-207; these read IVMF…IFIL, CGIP…TGGF, GGLA…ELAL, MLAA…LLMY, and LAVI…AMVV.

Belongs to the CobS family. Requires Mg(2+) as cofactor.

Its subcellular location is the cell inner membrane. The catalysed reaction is alpha-ribazole + adenosylcob(III)inamide-GDP = adenosylcob(III)alamin + GMP + H(+). The enzyme catalyses alpha-ribazole 5'-phosphate + adenosylcob(III)inamide-GDP = adenosylcob(III)alamin 5'-phosphate + GMP + H(+). It functions in the pathway cofactor biosynthesis; adenosylcobalamin biosynthesis; adenosylcobalamin from cob(II)yrinate a,c-diamide: step 7/7. Functionally, joins adenosylcobinamide-GDP and alpha-ribazole to generate adenosylcobalamin (Ado-cobalamin). Also synthesizes adenosylcobalamin 5'-phosphate from adenosylcobinamide-GDP and alpha-ribazole 5'-phosphate. In Salmonella choleraesuis (strain SC-B67), this protein is Adenosylcobinamide-GDP ribazoletransferase.